The primary structure comprises 400 residues: Tyrosine-specific transport system 1 (400 aa).

12 consecutive transmembrane segments (helical) span residues 5–25, 34–54, 80–100, 117–137, 143–163, 176–196, 211–231, 250–270, 273–293, 313–333, 335–355, and 370–390; these read VGST…AMPL, FTLV…LLFV, IIAT…YISG, VSVL…THSV, VLFF…LPEI, ALII…GSIP, FSIL…QLST, LNGL…ASAV, FSTL…LECI, LTFI…ILAL, YAGQ…VWKA, and NLTL…PFAI.

Belongs to the amino acid/polyamine transporter 2 family. Mtr/TnaB/TyrP permease subfamily.

Its subcellular location is the cell inner membrane. The catalysed reaction is L-tyrosine(in) + H(+)(in) = L-tyrosine(out) + H(+)(out). In terms of biological role, transports tyrosine across the cytoplasmic membrane. The transport system is energized by the proton motive force. This chain is Tyrosine-specific transport system 1 (tyrP-A), found in Haemophilus influenzae (strain ATCC 51907 / DSM 11121 / KW20 / Rd).